A 435-amino-acid chain; its full sequence is Protein lin-54 (435 aa).

The disordered stretch occupies residues Asp73–Pro136. The segment covering Thr102–Pro120 has biased composition (polar residues). A CRC domain is found at Gln173 to Thr288. The DNA-binding stretch occupies residues Lys175 to Tyr188. Positions 177, 179, 184, 189, 191, 198, 201, 203, and 206 each coordinate Zn(2+). The linker stretch occupies residues Ile235–Gln250. Zn(2+) contacts are provided by Cys253, Cys255, Cys260, Cys265, Cys267, Cys274, Cys278, Cys280, and Cys283. The DNA-binding stretch occupies residues Cys253–Glu266. The segment at Leu415–Ser435 is disordered.

Belongs to the lin-54 family. As to quaternary structure, component of the DRM complex, at least composed of lin-9, lin-35, lin-37, lin-52, lin-53, lin-54- dpl-1 and efl-1.

The protein resides in the nucleus. It is found in the chromosome. Synthetic multivulva class B (synMuvB) protein. SynMuvB proteins are required to repress the induction of vulval development by Ras signaling and probably act by forming the multiprotein DRM complex that repress transcription. The protein is Protein lin-54 of Caenorhabditis elegans.